A 290-amino-acid polypeptide reads, in one-letter code: MADLSFIEDTVAFPEKEEDEEEEEEGVEWGYEEGVEWGLVFPDANGEYQSPINLNSREARYDPSLLDVRLSPNYVVCRDCEVTNDGHTIQVILKSKSVLSGGPLPQGHEFELYEVRFHWGRENQRGSEHTVNFKAFPMELHLIHWNSTLFGSIDEAVGKPHGIAIIALFVQIGKEHVGLKAVTEILQDIQYKGKSKTIPCFNPNTLLPDPLLRDYWVYEGSLTIPPCSEGVTWILFRYPLTISQLQIEEFRRLRTHVKGAELVEGCDGILGDNFRPTQPLSDRVIRAAFQ.

The disordered stretch occupies residues 1-26; sequence MADLSFIEDTVAFPEKEEDEEEEEEG. Ser-5 bears the Phosphoserine mark. The span at 16–26 shows a compositional bias: acidic residues; the sequence is KEEDEEEEEEG. One can recognise an Alpha-carbonic anhydrase domain in the interval 27-289; it reads VEWGYEEGVE…LSDRVIRAAF (263 aa). The Proton donor/acceptor role is filled by His-87. Residues His-118 and His-141 each coordinate Zn(2+).

Belongs to the alpha-carbonic anhydrase family.

Its function is as follows. Does not have a carbonic anhydrase catalytic activity. The protein is Carbonic anhydrase-related protein (CA8) of Homo sapiens (Human).